The chain runs to 482 residues: Hydroxymethylglutaryl-CoA synthase A (482 aa).

Residue Glu-85 is the Proton donor/acceptor of the active site. Catalysis depends on Cys-119, which acts as the Acyl-thioester intermediate. Residues Cys-119, Thr-161, Ser-211, His-249, Lys-258, Asn-325, and Ser-358 each contribute to the (3S)-3-hydroxy-3-methylglutaryl-CoA site. His-249 serves as the catalytic Proton donor/acceptor.

It belongs to the thiolase-like superfamily. HMG-CoA synthase family.

It carries out the reaction acetoacetyl-CoA + acetyl-CoA + H2O = (3S)-3-hydroxy-3-methylglutaryl-CoA + CoA + H(+). It participates in metabolic intermediate biosynthesis; (R)-mevalonate biosynthesis; (R)-mevalonate from acetyl-CoA: step 2/3. In terms of biological role, condenses acetyl-CoA with acetoacetyl-CoA to form HMG-CoA, which is the substrate for HMG-CoA reductase. The protein is Hydroxymethylglutaryl-CoA synthase A (hgsA) of Dictyostelium discoideum (Social amoeba).